A 37-amino-acid chain; its full sequence is Cortex morphogenetic protein A (37 aa).

In terms of assembly, can form a complex with SpoIVA and ClpX.

It is found in the forespore. Functionally, ensures proper spore envelope assembly. Represses premature cortex assembly until coat assembly successfully initiates. Also participates in a quality-control pathway that selectively removes defective sporulating cells through regulated cell death. Acts as an adaptator that delivers SpoIVA to the ClpXP proteolytic machinery for degradation, specifically in cells that improperly assemble the spore envelope. The chain is Cortex morphogenetic protein A from Bacillus subtilis (strain 168).